A 160-amino-acid chain; its full sequence is Lymphocyte antigen 96 (160 aa).

Residues 1-18 (MLPFLFFSTLFSSIFTEA) form the signal peptide. 3 disulfides stabilise this stretch: Cys25–Cys51, Cys37–Cys148, and Cys95–Cys105. An N-linked (GlcNAc...) asparagine glycan is attached at Asn26. The N-linked (GlcNAc...) asparagine glycan is linked to Asn114. The segment at 119–123 (FSFKG) is interaction with lipopolysaccharide.

In terms of assembly, heterogeneous homomer formed from homodimers; disulfide-linked. Belongs to the lipopolysaccharide (LPS) receptor, a multi-protein complex containing at least CD14, LY96 and TLR4. Binds to the extracellular domains of TLR2 and TLR4. Ligand binding induces interaction with TLR4 and oligomerization of the complex. In terms of processing, N-glycosylated; high-mannose.

Its subcellular location is the secreted. The protein localises to the extracellular space. Binds bacterial lipopolysaccharide (LPS). Cooperates with TLR4 in the innate immune response to bacterial lipopolysaccharide (LPS), and with TLR2 in the response to cell wall components from Gram-positive and Gram-negative bacteria. Enhances TLR4-dependent activation of NF-kappa-B. Cells expressing both LY96 and TLR4, but not TLR4 alone, respond to LPS. The polypeptide is Lymphocyte antigen 96 (LY96) (Homo sapiens (Human)).